We begin with the raw amino-acid sequence, 184 residues long: Peptide deformylase (184 aa).

The Fe cation site is built by C111 and H154. E155 is a catalytic residue. H158 provides a ligand contact to Fe cation.

Belongs to the polypeptide deformylase family. It depends on Fe(2+) as a cofactor.

The enzyme catalyses N-terminal N-formyl-L-methionyl-[peptide] + H2O = N-terminal L-methionyl-[peptide] + formate. In terms of biological role, removes the formyl group from the N-terminal Met of newly synthesized proteins. Requires at least a dipeptide for an efficient rate of reaction. N-terminal L-methionine is a prerequisite for activity but the enzyme has broad specificity at other positions. The polypeptide is Peptide deformylase (Pediococcus pentosaceus (strain ATCC 25745 / CCUG 21536 / LMG 10740 / 183-1w)).